A 501-amino-acid polypeptide reads, in one-letter code: Serine/threonine-protein kinase pelle (501 aa).

Residues 1-25 are disordered; that stretch reads MSGVQTAEAEAQAQNQANGNRTRSR. The span at 7 to 18 shows a compositional bias: low complexity; it reads AEAEAQAQNQAN. One can recognise a Death domain in the interval 55-121; it reads WQQLATAVKL…NAMRLIKDYV (67 aa). The tract at residues 144 to 176 is disordered; the sequence is DSSAKVNNGPPFPSSSGVSNSNNNRTSTTATEE. Positions 149–167 are enriched in low complexity; the sequence is VNNGPPFPSSSGVSNSNNN. The region spanning 213–499 is the Protein kinase domain; that stretch reads WSPDNRLGQG…AVLKRFEPFV (287 aa). ATP is bound by residues 219–227 and Lys-240; that span reads LGQGGFGDV. Residue Asp-346 is the Proton acceptor of the active site. Residues 348-351 and Asp-364 contribute to the ATP site; that span reads KPAN.

This sequence belongs to the protein kinase superfamily. TKL Ser/Thr protein kinase family. Pelle subfamily. Interacts (via Death domain) with tub (via Death domain). Interacts with Pellino (Pli).

It is found in the cell membrane. Its subcellular location is the cytoplasm. It carries out the reaction L-seryl-[protein] + ATP = O-phospho-L-seryl-[protein] + ADP + H(+). The enzyme catalyses L-threonyl-[protein] + ATP = O-phospho-L-threonyl-[protein] + ADP + H(+). Its function is as follows. Plays an essential role in the Tl receptor signaling pathway that establishes embryonic dorsoventral polarity; the signal directs import of dl into ventral and ventrolateral nuclei, thereby establishing dorsoventral polarity. Tub recruits pll to the plasma membrane and protein-protein interaction activates pll. This chain is Serine/threonine-protein kinase pelle (pll), found in Drosophila melanogaster (Fruit fly).